Consider the following 162-residue polypeptide: MQIFPQTNELIWTIINFAVLLWGMHRFLYKPLLGAIQAREDEINANLKKAAEDRAEAERLRREFEAQIANAQREAQEIINKAVKNATAVKEQIEAEARARAAEILEQATQTIEREKAKAVAELRREVADLAVAVAGKVIEKSLDDAEHRRLADSFVTEVTKH.

The chain crosses the membrane as a helical span at residues 10 to 29 (LIWTIINFAVLLWGMHRFLY).

It belongs to the ATPase B chain family. As to quaternary structure, F-type ATPases have 2 components, F(1) - the catalytic core - and F(0) - the membrane proton channel. F(1) has five subunits: alpha(3), beta(3), gamma(1), delta(1), epsilon(1). F(0) has three main subunits: a(1), b(2) and c(10-14). The alpha and beta chains form an alternating ring which encloses part of the gamma chain. F(1) is attached to F(0) by a central stalk formed by the gamma and epsilon chains, while a peripheral stalk is formed by the delta and b chains.

It localises to the cell membrane. Its function is as follows. F(1)F(0) ATP synthase produces ATP from ADP in the presence of a proton or sodium gradient. F-type ATPases consist of two structural domains, F(1) containing the extramembraneous catalytic core and F(0) containing the membrane proton channel, linked together by a central stalk and a peripheral stalk. During catalysis, ATP synthesis in the catalytic domain of F(1) is coupled via a rotary mechanism of the central stalk subunits to proton translocation. Component of the F(0) channel, it forms part of the peripheral stalk, linking F(1) to F(0). The protein is ATP synthase subunit b of Symbiobacterium thermophilum (strain DSM 24528 / JCM 14929 / IAM 14863 / T).